Consider the following 1441-residue polypeptide: Pleiotropic drug resistance protein TUR2 (1441 aa).

Positions L158–E430 constitute an ABC transporter 1 domain. Residue G191–T198 coordinates ATP. The region spanning E508–F721 is the ABC transmembrane type-2 1 domain. The next 6 helical transmembrane spans lie at F526–F546, A559–A579, I614–F634, L646–G666, V671–I691, and I756–L776. The 253-residue stretch at I843–D1095 folds into the ABC transporter 2 domain. G888 to T895 contacts ATP. An ABC transmembrane type-2 2 domain is found at M1168–F1382. A run of 7 helical transmembrane segments spans residues Y1187 to W1207, T1215 to I1235, V1275 to F1295, F1302 to M1322, I1332 to I1352, W1363 to G1383, and V1413 to I1433.

Belongs to the ABC transporter superfamily. ABCG family. PDR (TC 3.A.1.205) subfamily. In terms of tissue distribution, ubiquitous.

It is found in the cell membrane. In terms of biological role, may be a general defense protein. Seems involved in turion (dormant buds) formation. Confers resistance to the diterpenoid antifungal agent sclareol. The protein is Pleiotropic drug resistance protein TUR2 (TUR2) of Spirodela polyrhiza (Giant duckweed).